Reading from the N-terminus, the 68-residue chain is Large ribosomal subunit protein bL31 (68 aa).

4 residues coordinate Zn(2+): Cys-16, Cys-18, Cys-37, and Cys-40.

This sequence belongs to the bacterial ribosomal protein bL31 family. Type A subfamily. As to quaternary structure, part of the 50S ribosomal subunit. Zn(2+) is required as a cofactor.

Binds the 23S rRNA. This chain is Large ribosomal subunit protein bL31, found in Aquifex aeolicus (strain VF5).